A 92-amino-acid chain; its full sequence is Small ribosomal subunit protein uS19 (92 aa).

This sequence belongs to the universal ribosomal protein uS19 family.

Its function is as follows. Protein S19 forms a complex with S13 that binds strongly to the 16S ribosomal RNA. In Neisseria meningitidis serogroup C (strain 053442), this protein is Small ribosomal subunit protein uS19.